The following is a 90-amino-acid chain: Small ribosomal subunit protein uS15 (90 aa).

The protein belongs to the universal ribosomal protein uS15 family. Part of the 30S ribosomal subunit. Forms a bridge to the 50S subunit in the 70S ribosome, contacting the 23S rRNA.

Functionally, one of the primary rRNA binding proteins, it binds directly to 16S rRNA where it helps nucleate assembly of the platform of the 30S subunit by binding and bridging several RNA helices of the 16S rRNA. In terms of biological role, forms an intersubunit bridge (bridge B4) with the 23S rRNA of the 50S subunit in the ribosome. In Campylobacter hominis (strain ATCC BAA-381 / DSM 21671 / CCUG 45161 / LMG 19568 / NCTC 13146 / CH001A), this protein is Small ribosomal subunit protein uS15.